The chain runs to 149 residues: Ribonuclease P protein component (149 aa).

The disordered stretch occupies residues 123–149 (GTKVSRRSNGALHDAAPSSQPDPTVSG). Positions 139–149 (PSSQPDPTVSG) are enriched in polar residues.

It belongs to the RnpA family. As to quaternary structure, consists of a catalytic RNA component (M1 or rnpB) and a protein subunit.

It catalyses the reaction Endonucleolytic cleavage of RNA, removing 5'-extranucleotides from tRNA precursor.. RNaseP catalyzes the removal of the 5'-leader sequence from pre-tRNA to produce the mature 5'-terminus. It can also cleave other RNA substrates such as 4.5S RNA. The protein component plays an auxiliary but essential role in vivo by binding to the 5'-leader sequence and broadening the substrate specificity of the ribozyme. This chain is Ribonuclease P protein component, found in Caulobacter vibrioides (strain ATCC 19089 / CIP 103742 / CB 15) (Caulobacter crescentus).